A 309-amino-acid polypeptide reads, in one-letter code: Cell division protein FtsQ (309 aa).

Over 1 to 52 (MLALRGRRGKRVRYPADGVAEADEAFVLPRPLRRGVRFLISLGAGRIRFPNH) the chain is Cytoplasmic. The helical transmembrane segment at 53–74 (TGTVAAAAFMVATGLYGMSLGG) threads the bilayer. The Periplasmic segment spans residues 75–309 (HTQSFAQVST…KMLKAQEKRI (235 aa)). Residues 89-157 (FAIEDVRVSG…GTIEVVLKER (69 aa)) enclose the POTRA domain.

Belongs to the FtsQ/DivIB family. FtsQ subfamily.

It localises to the cell inner membrane. Essential cell division protein. In Rhizobium meliloti (strain 1021) (Ensifer meliloti), this protein is Cell division protein FtsQ.